The primary structure comprises 275 residues: Phosphate import ATP-binding protein PstB (275 aa).

Positions 28-270 (IDCRDIRVFY…PREKRTEDYI (243 aa)) constitute an ABC transporter domain. 60–67 (GPSGCGKS) is a binding site for ATP.

It belongs to the ABC transporter superfamily. Phosphate importer (TC 3.A.1.7) family. As to quaternary structure, the complex is composed of two ATP-binding proteins (PstB), two transmembrane proteins (PstC and PstA) and a solute-binding protein (PstS).

The protein resides in the cell inner membrane. The catalysed reaction is phosphate(out) + ATP + H2O = ADP + 2 phosphate(in) + H(+). Part of the ABC transporter complex PstSACB involved in phosphate import. Responsible for energy coupling to the transport system. The polypeptide is Phosphate import ATP-binding protein PstB (Hyphomonas neptunium (strain ATCC 15444)).